An 864-amino-acid polypeptide reads, in one-letter code: Probable beta-glucosidase J (864 aa).

The active site involves D233. The PA14 domain maps to 411-578 (TGEPGYTFRV…DTDAAIQQAV (168 aa)). Residues N434, N447, and N503 are each glycosylated (N-linked (GlcNAc...) asparagine).

This sequence belongs to the glycosyl hydrolase 3 family.

It is found in the secreted. It catalyses the reaction Hydrolysis of terminal, non-reducing beta-D-glucosyl residues with release of beta-D-glucose.. Its pathway is glycan metabolism; cellulose degradation. Beta-glucosidases are one of a number of cellulolytic enzymes involved in the degradation of cellulosic biomass. Catalyzes the last step releasing glucose from the inhibitory cellobiose. The sequence is that of Probable beta-glucosidase J (bglJ) from Neosartorya fischeri (strain ATCC 1020 / DSM 3700 / CBS 544.65 / FGSC A1164 / JCM 1740 / NRRL 181 / WB 181) (Aspergillus fischerianus).